Consider the following 891-residue polypeptide: Alanine--tRNA ligase (891 aa).

His-574, His-578, Cys-676, and His-680 together coordinate Zn(2+).

Belongs to the class-II aminoacyl-tRNA synthetase family. Zn(2+) is required as a cofactor.

The protein resides in the cytoplasm. It carries out the reaction tRNA(Ala) + L-alanine + ATP = L-alanyl-tRNA(Ala) + AMP + diphosphate. Catalyzes the attachment of alanine to tRNA(Ala) in a two-step reaction: alanine is first activated by ATP to form Ala-AMP and then transferred to the acceptor end of tRNA(Ala). Also edits incorrectly charged Ser-tRNA(Ala) and Gly-tRNA(Ala) via its editing domain. This is Alanine--tRNA ligase from Synechococcus sp. (strain WH7803).